The following is a 125-amino-acid chain: Prepro-urotensin II-gamma (125 aa).

Positions 1 to 21 (MMCNLLLSCSVLLLSCSHLLA) are cleaved as a signal peptide. Residues 109–111 (QFR) constitute a propeptide that is removed on maturation. Cysteines 119 and 124 form a disulfide.

The protein belongs to the urotensin-2 family.

It localises to the secreted. Urotensin is found in the teleost caudal neurosecretory system. It has a suggested role in osmoregulation and as a corticotropin-releasing factor. The non-hormonal portion of this precursor may be a urotensin binding protein, urophysin. This is Prepro-urotensin II-gamma from Cyprinus carpio (Common carp).